Reading from the N-terminus, the 420-residue chain is MEWADKYRPKRIEDLIVSEEIRQKIQSWIDAWEEGSPKKRALILYGVQGSGKTSAAYAIAGTFGLPVVEMNASEQRNRESMKATALMASLYADLGASDFRKPSKVILIDEADNIFESNNPKRGGDTGGVYELSKIVKETRNPVIITMNDFYEFRKKNYSSEVINNSESIEFKPYARRLDRNYNEFKKNVRNRIKWIINQEGFSLPDDIINSIIDKNAPDIRSIINDVEAAAVSQSSISQNNDRDTVESVYYLVDKAFKKNYDDTLKSIYGSDVDSDYFINWVEENLPSKTDDISDLNSAYEQLSFADHILWAIERKRHFDLMTFPMEIAGGLAYYIENPKHEYVKFHSPSYINSMSRSKERRHALNAVSLKIGLLLHMSGVESLNYVWFYRLMFKVNAGFRDTVYERLNLTQGEEAVLES.

ATP is bound at residue 46–53 (GVQGSGKT).

Belongs to the activator 1 small subunits family. RfcL subfamily. Heteromultimer composed of small subunits (RfcS) and large subunits (RfcL).

Part of the RFC clamp loader complex which loads the PCNA sliding clamp onto DNA. The polypeptide is Replication factor C large subunit (Thermoplasma volcanium (strain ATCC 51530 / DSM 4299 / JCM 9571 / NBRC 15438 / GSS1)).